A 170-amino-acid chain; its full sequence is Adenine phosphoribosyltransferase (170 aa).

It belongs to the purine/pyrimidine phosphoribosyltransferase family. Homodimer.

Its subcellular location is the cytoplasm. The catalysed reaction is AMP + diphosphate = 5-phospho-alpha-D-ribose 1-diphosphate + adenine. It functions in the pathway purine metabolism; AMP biosynthesis via salvage pathway; AMP from adenine: step 1/1. Its function is as follows. Catalyzes a salvage reaction resulting in the formation of AMP, that is energically less costly than de novo synthesis. The protein is Adenine phosphoribosyltransferase of Streptococcus sanguinis (strain SK36).